Reading from the N-terminus, the 700-residue chain is Polyribonucleotide nucleotidyltransferase (700 aa).

The Mg(2+) site is built by Asp-487 and Asp-493. One can recognise a KH domain in the interval 554 to 613; the sequence is PRLLTIKIHPDKIRDVIGKGGSTIQAITKDTGTQIDIQDDGTIVIASVNNAAAREAKRRI. Positions 623–691 constitute an S1 motif domain; sequence GRIYEGKVAK…KQGRIRLSIK (69 aa).

This sequence belongs to the polyribonucleotide nucleotidyltransferase family. Component of the RNA degradosome, which is a multiprotein complex involved in RNA processing and mRNA degradation. Requires Mg(2+) as cofactor.

It is found in the cytoplasm. It carries out the reaction RNA(n+1) + phosphate = RNA(n) + a ribonucleoside 5'-diphosphate. Functionally, involved in mRNA degradation. Catalyzes the phosphorolysis of single-stranded polyribonucleotides processively in the 3'- to 5'-direction. The chain is Polyribonucleotide nucleotidyltransferase from Xylella fastidiosa (strain M12).